We begin with the raw amino-acid sequence, 60 residues long: uncharacterized protein (60 aa).

This is an uncharacterized protein from Methanocaldococcus jannaschii (strain ATCC 43067 / DSM 2661 / JAL-1 / JCM 10045 / NBRC 100440) (Methanococcus jannaschii).